The primary structure comprises 431 residues: Synaptotagmin-11 (431 aa).

Residues Met-1–Pro-15 lie on the Vesicular side of the membrane. A helical transmembrane segment spans residues Val-16–Val-36. The Cytoplasmic segment spans residues Trp-37–Tyr-431. A Phosphoserine modification is found at Ser-134. Residues Ser-134–Glu-154 are disordered. Over residues Thr-140 to Ser-151 the composition is skewed to low complexity. C2 domains follow at residues Met-157–Arg-279 and Ser-291–His-426. Positions 250, 253, and 256 each coordinate Ca(2+).

It belongs to the synaptotagmin family. Homodimer. Can also form heterodimers. Interacts with PRKN. Interacts (via C2 2 domain) with AGO2 and SND1; the interaction with SND1 is direct. Interacts with KIF1A; the interaction increases in presence of calcium. Ca(2+) is required as a cofactor. In terms of processing, ubiquitinated, at least by PRKN, and targeted to the proteasome complex for degradation. Ubiquitination is inhibited by ATP13A2.

The protein resides in the cytoplasmic vesicle membrane. Its subcellular location is the perikaryon. It localises to the golgi apparatus. The protein localises to the trans-Golgi network membrane. It is found in the recycling endosome membrane. The protein resides in the lysosome membrane. Its subcellular location is the cytoplasmic vesicle. It localises to the phagosome. The protein localises to the cell projection. It is found in the axon. The protein resides in the dendrite. Its subcellular location is the postsynaptic density. It localises to the clathrin-coated vesicle membrane. Synaptotagmin family member involved in vesicular and membrane trafficking which does not bind Ca(2+). Inhibits clathrin-mediated and bulk endocytosis, functions to ensure precision in vesicle retrieval. Plays an important role in dopamine transmission by regulating endocytosis and the vesicle-recycling process. Essential component of a neuronal vesicular trafficking pathway that differs from the synaptic vesicle trafficking pathway but is crucial for development and synaptic plasticity. In macrophages and microglia, inhibits the conventional cytokine secretion, of at least IL6 and TNF, and phagocytosis. In astrocytes, regulates lysosome exocytosis, mechanism required for the repair of injured astrocyte cell membrane. Required for the ATP13A2-mediated regulation of the autophagy-lysosome pathway. In Homo sapiens (Human), this protein is Synaptotagmin-11.